A 568-amino-acid chain; its full sequence is K(+) efflux antiporter 5 (568 aa).

Positions 1–20 (MARFAVIGLTFLLLLGTSLS) are cleaved as a signal peptide. Residues 59-78 (EFSENDSPEGSDGASFNSSV) form a disordered region. 12 consecutive transmembrane segments (helical) span residues 154–174 (LISD…VFSC), 178–198 (PVIV…LKFI), 201–221 (MVQV…ALGL), 230–250 (VVGP…MFLC), 264–284 (GIFV…KFLV), 298–318 (IGIL…LPVL), 334–354 (LLLI…SFVP), 389–409 (LGLS…TTEF), 422–442 (NLFA…HFLW), 447–467 (ILLA…AVVV), 476–496 (ISFH…VLLS), and 510–530 (LLLL…FKLI).

The protein belongs to the monovalent cation:proton antiporter 2 (CPA2) transporter (TC 2.A.37) family. KEA (TC 2.A.37.1) subfamily. In terms of tissue distribution, expressed in roots, stems, leaves, flowers and silique.

The protein resides in the golgi apparatus membrane. It localises to the golgi apparatus. Its subcellular location is the trans-Golgi network membrane. The protein localises to the prevacuolar compartment membrane. It is found in the endomembrane system. The catalysed reaction is K(+)(in) + H(+)(out) = K(+)(out) + H(+)(in). Its function is as follows. Electroneutral K(+)/H(+) efflux antiporter involved in K(+) homeostasis and osmotic adjustment. Together with KEA4 and KEA6, promotes growth and development, and facilitates endosomal pH and ions homeostasis, as well as salt tolerance (e.g. K(+), NaCl and LiCl), probably by supporting cell wall biosynthesis during rapid etiolated seedling growth. The protein is K(+) efflux antiporter 5 of Arabidopsis thaliana (Mouse-ear cress).